The primary structure comprises 643 residues: MNANPKFLSADAHVDEAAVAPLPNSRKVYVTGSRPDIRVPMREISQADTPDSFGGEKNPPVFVYDTSGPYSDPEARIDIRAGLPALRQAWIEERGDTEALTGLSSDFGRERAADTATADLRFQGLHRTPRRAIAGKNVSQMHYARKGIITPEMEYIAIRENQRRAEYLESLKTSGPNGEKLAAMMGRQHPGQAFGASAFGPNGLTEITPEFVREEVARGRAIIPNNINHPESEPMIIGRNFLVKVNANIGNSAVTSSIGEEVDKMTWAIRWGGDTVMDLSTGKHIHETREWIIRNSPVPIGTVPIYQALEKVNGKAEDLTWEIFRDTLIEQAEQGVDYFTIHAGVRLQYVPLTAKRMTGIVSRGGSIMAKWCLAHHKESFLYEHFEDICEIMKAYDVAFSLGDGLRPGSIYDANDEAQLGELKTLGELTQIAWKHDVQTMIEGPGHVPMQLIKENMDLQLEWCDEAPFYTLGPLTTDIAPGYDHITSGIGAAMIGWFGTAMLCYVTPKEHLGLPNKDDVKTGIITYKLAAHAADLAKGHPGAQVRDNALSKARFEFRWEDQFNLGLDPDKAREFHDETLPKDSAKVAHFCSMCGPHFCSMKITQDVREFAAQQGVTDDEALKKGMEVKSIEFMKKGAEIYQRQ.

Substrate is bound by residues Asn-248, Met-277, Tyr-306, His-342, 362 to 364 (SRG), 403 to 406 (DGLR), and Glu-442. Position 446 (His-446) interacts with Zn(2+). Tyr-469 is a binding site for substrate. A Zn(2+)-binding site is contributed by His-510. [4Fe-4S] cluster contacts are provided by Cys-590, Cys-593, and Cys-598.

It belongs to the ThiC family. As to quaternary structure, homodimer. The cofactor is [4Fe-4S] cluster.

It carries out the reaction 5-amino-1-(5-phospho-beta-D-ribosyl)imidazole + S-adenosyl-L-methionine = 4-amino-2-methyl-5-(phosphooxymethyl)pyrimidine + CO + 5'-deoxyadenosine + formate + L-methionine + 3 H(+). It functions in the pathway cofactor biosynthesis; thiamine diphosphate biosynthesis. Functionally, catalyzes the synthesis of the hydroxymethylpyrimidine phosphate (HMP-P) moiety of thiamine from aminoimidazole ribotide (AIR) in a radical S-adenosyl-L-methionine (SAM)-dependent reaction. The protein is Phosphomethylpyrimidine synthase of Paraburkholderia xenovorans (strain LB400).